We begin with the raw amino-acid sequence, 184 residues long: Myosin regulatory light chain 1 (184 aa).

The segment at 1–29 (MFSSKENSLGAKRAPFSSNTTSSQRVAAQ) is disordered. Phosphoserine is present on Ser36. 2 EF-hand domains span residues 45-80 (SQIQELKEAFALLDKDGDGNIGREDVKTMLTSLNQD) and 114-149 (SPRNDLLEAFSTFDDTQSGKIPISTMRDALSSMGDR). Ca(2+) contacts are provided by Asp58, Asp60, Asp62, Asn64, and Asp69.

In terms of assembly, binds to myosin II chains myo2 and myo3.

The protein localises to the cytoplasm. This Schizosaccharomyces pombe (strain 972 / ATCC 24843) (Fission yeast) protein is Myosin regulatory light chain 1 (rlc1).